A 161-amino-acid polypeptide reads, in one-letter code: Regulator of ribonuclease activity A (161 aa).

Belongs to the RraA family. Homotrimer. Binds to both RNA-binding sites in the C-terminal region of Rne and to RhlB.

Its subcellular location is the cytoplasm. Functionally, globally modulates RNA abundance by binding to RNase E (Rne) and regulating its endonucleolytic activity. Can modulate Rne action in a substrate-dependent manner by altering the composition of the degradosome. Modulates RNA-binding and helicase activities of the degradosome. The protein is Regulator of ribonuclease activity A of Enterobacter sp. (strain 638).